The sequence spans 842 residues: Envelope glycoprotein H (842 aa).

The first 20 residues, 1–20 (MRRPLCAALLAAAVLALAAG), serve as a signal peptide directing secretion. Over 21 to 802 (APAAARGGAG…AGHEAPTFSP (782 aa)) the chain is Virion surface. Asn77 and Asn112 each carry an N-linked (GlcNAc...) asparagine; by host glycan. Positions 240–303 (ERAAARLAVG…AAGPQRRAYV (64 aa)) are interaction with gL. Asn617, Asn666, Asn760, and Asn783 each carry an N-linked (GlcNAc...) asparagine; by host glycan. Residues 803 to 823 (AYVWASVGGALVAGTTIYAIA) form a helical membrane-spanning segment. Topologically, residues 824-842 (KMLCSSVPLARGYSSVPVF) are intravirion.

Belongs to the herpesviridae glycoprotein H family. Interacts with glycoprotein L (gL); this interaction is necessary for the correct processing and cell surface expression of gH. The heterodimer gH/gL seems to interact with gB trimers during fusion. Post-translationally, N-glycosylated, O-glycosylated, and sialylated.

It is found in the virion membrane. The protein resides in the host cell membrane. It localises to the host endosome membrane. Its function is as follows. The heterodimer glycoprotein H-glycoprotein L is required for the fusion of viral and plasma membranes leading to virus entry into the host cell. Following initial binding to host receptor, membrane fusion is mediated by the fusion machinery composed of gB and the heterodimer gH/gL. May also be involved in the fusion between the virion envelope and the outer nuclear membrane during virion morphogenesis. The protein is Envelope glycoprotein H of Bos taurus (Bovine).